We begin with the raw amino-acid sequence, 464 residues long: Protein FAM90A8 (464 aa).

Disordered regions lie at residues 1–42 (MMAR…DPRL), 69–389 (VPAT…HDGA), and 415–437 (HSPE…SEAP). 2 stretches are compositionally biased toward basic and acidic residues: residues 74-89 (GKKE…KPRG) and 97-114 (NKDK…DPQR). The span at 180–197 (LASLSPLRKASLSSSSSL) shows a compositional bias: low complexity.

The protein belongs to the FAM90 family.

This is Protein FAM90A8 (FAM90A8) from Homo sapiens (Human).